Here is a 253-residue protein sequence, read N- to C-terminus: HTH-type transcriptional regulator YdeO (253 aa).

The HTH araC/xylS-type domain maps to 137 to 233; it reads GKVRNIVNMK…GNSPKRVSKE (97 aa). DNA-binding regions (H-T-H motif) lie at residues 154-175 and 200-223; these read KDIC…KQEQ and VNKI…RKHF.

Induces the expression of gadE. Could also regulate the expression of other genes involved in acid resistance. In Shigella flexneri, this protein is HTH-type transcriptional regulator YdeO (ydeO).